Reading from the N-terminus, the 963-residue chain is Seizure 6-like protein (963 aa).

The first 31 residues, methionine 1 to alanine 31, serve as a signal peptide directing secretion. Disordered regions lie at residues alanine 28–serine 63, arginine 116–alanine 150, and leucine 164–serine 204. At glutamate 32–alanine 897 the chain is on the extracellular side. The segment covering leucine 47–glutamate 59 has biased composition (low complexity). Residues threonine 120–threonine 135 are compositionally biased toward polar residues. Residues threonine 191 to serine 204 are compositionally biased toward low complexity. Residues cysteine 221 and cysteine 248 are joined by a disulfide bond. In terms of domain architecture, CUB 1 spans cysteine 221–phenylalanine 329. N-linked (GlcNAc...) asparagine glycosylation is found at asparagine 251, asparagine 268, and asparagine 290. The Sushi 1 domain occupies leucine 331–alanine 390. 3 disulfide bridges follow: cysteine 333-cysteine 373, cysteine 359-cysteine 388, and cysteine 392-cysteine 419. 6 N-linked (GlcNAc...) asparagine glycosylation sites follow: asparagine 375, asparagine 398, asparagine 414, asparagine 454, asparagine 516, and asparagine 558. The CUB 2 domain maps to cysteine 392–phenylalanine 502. The Sushi 2 domain maps to glycine 505–alanine 566. 3 disulfide bridges follow: cysteine 507–cysteine 549, cysteine 534–cysteine 564, and cysteine 568–cysteine 594. Residues cysteine 568 to valine 679 form the CUB 3 domain. Residues asparagine 614 and asparagine 682 are each glycosylated (N-linked (GlcNAc...) asparagine). Sushi domains are found at residues aspartate 683–lysine 742, methionine 744–serine 807, and leucine 811–valine 872. 6 disulfides stabilise this stretch: cysteine 685/cysteine 727, cysteine 713/cysteine 740, cysteine 746/cysteine 788, cysteine 774/cysteine 805, cysteine 813/cysteine 855, and cysteine 841/cysteine 870. The chain crosses the membrane as a helical span at residues leucine 898–valine 918. The Cytoplasmic segment spans residues threonine 919–isoleucine 963.

The protein belongs to the SEZ6 family. As to expression, expressed exclusively in the brain, predominantly in neurons. Wide expression in the gray matter of the brain with high levels in the olfactory bulb, anterior olfactory nuclei, hippocampal formation and cerebellar cortex. Detected diffusely and weakly in the white matter, such as the corpus callosum and cerebellar medulla. In the cerebellar cortex, intensely expressed in Purkinje cells and granule cells. Detected also in interneurons in the molecular layer.

It localises to the cell membrane. The protein resides in the endoplasmic reticulum membrane. In terms of biological role, candidate tumor suppressor gene. May contribute to specialized endoplasmic reticulum functions in neurons. The sequence is that of Seizure 6-like protein (Sez6l) from Mus musculus (Mouse).